The chain runs to 324 residues: MIYQIIHSVLSTVGVSLNAFMMYLALTKSPKIMRPCSAIITIKTGTDILASIMSFFVMQRVITDGSSIIVIPTGPCTNFGKTACYVGHMLMLCFLEYNLIWMISSYIFRYYILYVRDPPIKHLVFVAFCLSIPSMVHMAAWFSFYDSNETTEDLSSYGIGSGEMALGGEVVYWSAITLITQLFITAFLVVVAYIWIRETLCSFAVKMGSVKKDVKNLNKRLVKVINFQVFLPSFIFLGVITFASMFTSKISYEYAQYAISVIFMFSPICSPFSYILFVPHYRNVIIGKKKQPKPHPEMCGPIRSNTRTTSISVTNNSSHLSSAH.

A run of 7 helical transmembrane segments spans residues 5–25 (IIHS…MYLA), 38–58 (AIIT…FFVM), 83–103 (ACYV…IWMI), 124–144 (VFVA…WFSF), 176–196 (ITLI…YIWI), 227–247 (FQVF…SMFT), and 258–278 (AISV…ILFV). Residues 290–324 (KQPKPHPEMCGPIRSNTRTTSISVTNNSSHLSSAH) are disordered. Residues 303-324 (RSNTRTTSISVTNNSSHLSSAH) are compositionally biased toward polar residues.

Belongs to the nematode receptor-like protein srd family.

Its subcellular location is the membrane. This is Serpentine receptor class delta-30 (srd-30) from Caenorhabditis elegans.